Here is a 65-residue protein sequence, read N- to C-terminus: Crotamine (65 aa).

The first 22 residues, 1-22 (MKILYLLFAFLFLAFLSEPGNA), serve as a signal peptide directing secretion. Short sequence motifs (nuclear localization signal) lie at residues 24–40 (KQCH…EKIC) and 49–61 (KMDC…CCKK). 3 cysteine pairs are disulfide-bonded: C26–C58, C33–C52, and C40–C59.

This sequence belongs to the crotamine-myotoxin family. Monomer. In terms of tissue distribution, expressed by the venom gland.

It localises to the secreted. Cationic peptide that possesses multiple functions. It acts as a cell-penetrating peptide (CPP), and as a potent voltage-gated potassium channel inhibitor. It exhibits antimicrobial activities, hind limb paralysis, and severe muscle necrosis by a non-enzymatic mechanism. As a cell-penetrating peptide, crotamine has high specificity for actively proliferating cells, and interacts inside the cell with subcellular and subnuclear structures, like vesicular compartments, chromosomes and centrioles. It penetrates into the cells as fast as five minutes after its addition to cell culture medium. In vivo, after intraperitoneal administration, it is found in cells of peritoneal fluid and bone marrow, demonstrating preferential nuclear and perinuclear localization. To enter the cell, it interacts with the chains of heparan sulfate membrane proteoglycan (HSPG), and is endocytosed (in complex with HSPG) in vesicles which are transported into the cell with the help of clathrin. Inside the cell, crotamine accumulates in lysosomal vesicles. As soon as the peptide accumulates in endosomes/lysosomes vesicles, these compartments are disrupted and their contents released into the cytosol. This loss of lysosomal content induces cell death at high concentrations, or promotes the distribution of crotamine in cytoplasmic compartments, which is a step before crotamine nuclear uptake. As a potassium channel inhibitor, this toxin selectively inhibits Kv1.1/KCNA1, Kv1.2/KCNA2 and Kv1.3/KCNA3 channels with an IC(50) of 369, 386 and 287 nM, respectively. The inhibition of Kv1.3/KCNA channels induced by this toxin occurs rapidly and is voltage-independent. The channel inhibition is reversible after washing, suggesting a pure and classical channel blockage effect, without effects in potassium channel kinetics. As an antimicrobial peptide, crotamine shows antibacterial activity against E.coli and B.subtilis, and antifungal activity against Candida spp., Trichosporon spp. and C.neoformans. It kills bacteria through membrane permeabilization. This chain is Crotamine (CRO2), found in Crotalus durissus terrificus (South American rattlesnake).